Consider the following 375-residue polypeptide: MDIEKKIELVSRKPTEEVLTVDNLKDLLEMGMPLQHYIGFEISGYIHLGTGLMAGAKIADFQKAGIKTRVFLADWHSWINDKLGGDLEVIQKVALGYFKEGMKQSIKVMGGDPEKVEFVLASEILERGDYWRTIIDISKNVTLARMMRSITIMGRQMGEAIDFAKLIYPAMQVADIFYQGVNIAHAGMDQRKAHVIAREVAEKLKYHPLVWDGKKVKPIAVHHHLLLGLQEPPKWPIEGEEEFKEIKAQMKMSKSKPYSAVFIHDTPEEIKQKLRKAFCPAGEVNYNPVLDWAEHIIFREEPTEFTIHRPAKFGGDVTYTTFEELKRDFAEGKLHPLDLKNAVAEYLVELLKPVREYFEKHPEPLELMKSVQITR.

Positions 37, 168, 172, 175, and 190 each coordinate L-tyrosine. Residues 251-255 carry the 'KMSKS' region motif; that stretch reads KMSKS. ATP is bound at residue lysine 254.

This sequence belongs to the class-I aminoacyl-tRNA synthetase family. TyrS type 4 subfamily. As to quaternary structure, homodimer.

It localises to the cytoplasm. It catalyses the reaction tRNA(Tyr) + L-tyrosine + ATP = L-tyrosyl-tRNA(Tyr) + AMP + diphosphate + H(+). In terms of biological role, catalyzes the attachment of tyrosine to tRNA(Tyr) in a two-step reaction: tyrosine is first activated by ATP to form Tyr-AMP and then transferred to the acceptor end of tRNA(Tyr). In Thermococcus sibiricus (strain DSM 12597 / MM 739), this protein is Tyrosine--tRNA ligase.